Reading from the N-terminus, the 291-residue chain is ATP synthase subunit a (291 aa).

The next 5 membrane-spanning stretches (helical) occupy residues 47 to 67 (FTNLSLSMLLTLGLVLLLVFV), 140 to 160 (HFLITLALSFSIFIGITIVGF), 167 to 187 (FFSFLLPAGVPLPLAPFLVLL), 207 to 227 (MMAGHSSVKILSGFAWTMLFL), and 230 to 250 (IFYFLGDLGPLFIVLALTGLE).

Belongs to the ATPase A chain family. F-type ATPases have 2 components, CF(1) - the catalytic core - and CF(0) - the membrane proton channel. CF(1) has five subunits: alpha(3), beta(3), gamma(1), delta(1), epsilon(1). CF(0) has three main subunits: a, b and c.

It localises to the mitochondrion inner membrane. Its function is as follows. Mitochondrial membrane ATP synthase (F(1)F(0) ATP synthase or Complex V) produces ATP from ADP in the presence of a proton gradient across the membrane which is generated by electron transport complexes of the respiratory chain. F-type ATPases consist of two structural domains, F(1) - containing the extramembraneous catalytic core and F(0) - containing the membrane proton channel, linked together by a central stalk and a peripheral stalk. During catalysis, ATP synthesis in the catalytic domain of F(1) is coupled via a rotary mechanism of the central stalk subunits to proton translocation. Key component of the proton channel; it may play a direct role in the translocation of protons across the membrane. The chain is ATP synthase subunit a (ATP6) from Zea mays (Maize).